The following is a 512-amino-acid chain: 2,3-bisphosphoglycerate-independent phosphoglycerate mutase (512 aa).

Residues Asp11 and Ser61 each contribute to the Mn(2+) site. The active-site Phosphoserine intermediate is Ser61. Residues His122, 152 to 153, Arg184, Arg190, 259 to 262, and Lys332 contribute to the substrate site; these read RD and RADR. Residues Asp399, His403, Asp440, His441, and His459 each coordinate Mn(2+).

The protein belongs to the BPG-independent phosphoglycerate mutase family. Monomer. Mn(2+) serves as cofactor.

It catalyses the reaction (2R)-2-phosphoglycerate = (2R)-3-phosphoglycerate. It participates in carbohydrate degradation; glycolysis; pyruvate from D-glyceraldehyde 3-phosphate: step 3/5. Its function is as follows. Catalyzes the interconversion of 2-phosphoglycerate and 3-phosphoglycerate. The protein is 2,3-bisphosphoglycerate-independent phosphoglycerate mutase of Francisella philomiragia subsp. philomiragia (strain ATCC 25017 / CCUG 19701 / FSC 153 / O#319-036).